The primary structure comprises 88 residues: Acylphosphatase (88 aa).

Residues 3–88 enclose the Acylphosphatase-like domain; it reads AARFVVSGVV…VPPTEDFVTG (86 aa). Residues Arg18 and Asn36 contribute to the active site.

The protein belongs to the acylphosphatase family.

It catalyses the reaction an acyl phosphate + H2O = a carboxylate + phosphate + H(+). The chain is Acylphosphatase (acyP) from Xanthomonas oryzae pv. oryzae (strain MAFF 311018).